A 60-amino-acid chain; its full sequence is Large ribosomal subunit protein bL32 (60 aa).

The tract at residues 1-28 (MAVQQNKKSRSARDMRRSHDALEASTLS) is disordered. Positions 11–22 (SARDMRRSHDAL) are enriched in basic and acidic residues.

Belongs to the bacterial ribosomal protein bL32 family.

This chain is Large ribosomal subunit protein bL32, found in Pseudomonas savastanoi pv. phaseolicola (strain 1448A / Race 6) (Pseudomonas syringae pv. phaseolicola (strain 1448A / Race 6)).